The chain runs to 357 residues: MAELREVQITEEKPLLPGQTPEVAKTHSVETPYGSVTFTVYGTPKPKRPAILTYHDVGLNYKSCFQPLFQFADMQEIIQNFVRVHVDAPGMEEGAPVFPLGYQYPSLDQLADMIPCILQYLNFSTIIGIGVGAGAYVLSRYALTHPDTVEGLVLINIDPNAKGWMDWAAHKLTGLTSSISEMILGHLFSQEELSGNSELIQKYRNIIAHAPNLDNIELYWNSYNNRRDLNFVRGGDTTLKCPVMLVVGDQAPHEDAVVECNSKLDPTQTSFLKMADSGGQPQLTQPGKLTEAFKYFLQGMGYMASSCMTRLSRSRTASLTSAASIDGNRSRSRTLSQSSESGTLSSGPPGHTMEVSC.

The span at 1–14 (MAELREVQITEEKP) shows a compositional bias: basic and acidic residues. Positions 1–26 (MAELREVQITEEKPLLPGQTPEVAKT) are disordered. Ala2 carries the N-acetylalanine modification. Position 20 is a phosphothreonine (Thr20). Phosphoserine is present on residues Ser312 and Ser314. Thr316 is subject to Phosphothreonine. Ser318 is subject to Phosphoserine. A Phosphothreonine modification is found at Thr320. The tract at residues 320–357 (TSAASIDGNRSRSRTLSQSSESGTLSSGPPGHTMEVSC) is disordered. Phosphoserine is present on residues Ser321, Ser324, and Ser330. Residues 333–347 (RTLSQSSESGTLSSG) show a composition bias toward low complexity. Thr334 carries the phosphothreonine modification. Phosphoserine occurs at positions 336, 338, 339, and 341. A Phosphothreonine modification is found at Thr343. At Ser356 the chain carries Phosphoserine.

This sequence belongs to the NDRG family. Interacts with CTNNB1.

The protein resides in the cytoplasm. It is found in the perinuclear region. It localises to the cell projection. Its subcellular location is the growth cone. In terms of biological role, contributes to the regulation of the Wnt signaling pathway. Down-regulates CTNNB1-mediated transcriptional activation of target genes, such as CCND1, and may thereby act as tumor suppressor. May be involved in dendritic cell and neuron differentiation. In Bos taurus (Bovine), this protein is Protein NDRG2 (NDRG2).